Here is a 78-residue protein sequence, read N- to C-terminus: Acyl carrier protein (78 aa).

In terms of domain architecture, Carrier spans 2 to 77; that stretch reads STIEERVKKI…AAIDYVTSHQ (76 aa). Serine 37 is modified (O-(pantetheine 4'-phosphoryl)serine).

This sequence belongs to the acyl carrier protein (ACP) family. In terms of processing, 4'-phosphopantetheine is transferred from CoA to a specific serine of apo-ACP by AcpS. This modification is essential for activity because fatty acids are bound in thioester linkage to the sulfhydryl of the prosthetic group.

Its subcellular location is the cytoplasm. The protein operates within lipid metabolism; fatty acid biosynthesis. Functionally, carrier of the growing fatty acid chain in fatty acid biosynthesis. The protein is Acyl carrier protein of Pseudomonas fluorescens (strain SBW25).